A 3739-amino-acid polypeptide reads, in one-letter code: Pikromycin polyketide synthase component PikAII (3739 aa).

One can recognise a Ketosynthase family 3 (KS3) 1 domain in the interval 35–463 (GEPVAIVGMA…GTNAHVVLEE (429 aa)). 2 module regions span residues 38-1517 (VAIV…EFLL) and 1542-3642 (VAIV…GHLL). Catalysis depends on Cys-208, which acts as the Acyl-thioester intermediate; for beta-ketoacyl synthase 1 activity. Residues His-343 and His-383 each act as for beta-ketoacyl synthase 1 activity in the active site. The segment at 572–877 (FVFPGQGTQW…ERLVTSLAEA (306 aa)) is acyltransferase 1. Ser-662 serves as the catalytic Acyl-ester intermediate; for acyltransferase 1 activity. Residues 1150-1343 (GTVLVTGAEE…VTSVAWSPWE (194 aa)) are C2-type beta-ketoacyl reductase 1. The active-site For C2-type beta-ketoacyl reductase 1 and probable racemase activities is Tyr-1313. The region spanning 1445–1520 (RRMQELVREH…TLAEFLLAEI (76 aa)) is the Carrier 1 domain. Residue Ser-1480 is modified to O-(pantetheine 4'-phosphoryl)serine. One can recognise a Ketosynthase family 3 (KS3) 2 domain in the interval 1539-1967 (DEPVAIVGMA…GTNAHIVLEE (429 aa)). Catalysis depends on Cys-1712, which acts as the Acyl-thioester intermediate; for beta-ketoacyl synthase 2 activity. Catalysis depends on for beta-ketoacyl synthase 2 activity residues His-1847 and His-1887. The acyltransferase 2 stretch occupies residues 2069–2374 (FVFPGQGTQW…HRLTTSLAEA (306 aa)). The Acyl-ester intermediate; for acyltransferase 2 activity role is filled by Ser-2159. Residues 2428–2553 (HPLLGAAVAL…GVLAARADRT (126 aa)) are N-terminal hotdog fold. The dehydratase stretch occupies residues 2428–2703 (HPLLGAAVAL…LTVLPVDPAQ (276 aa)). The PKS/mFAS DH domain maps to 2428–2705 (HPLLGAAVAL…VLPVDPAQLA (278 aa)). His-2460 functions as the Proton acceptor; for dehydratase activity in the catalytic mechanism. The interval 2567 to 2705 (AEPVDVDGLY…VLPVDPAQLA (139 aa)) is C-terminal hotdog fold. Asp-2629 serves as the catalytic Proton donor; for dehydratase activity. The segment at 2959–3267 (GSLESLTAAP…QARHTGKVVL (309 aa)) is enoyl reductase. Tyr-3005 serves as the catalytic For enoyl reductase activity. Residues 3092–3109 (LLVH…VQLA), 3285–3288 (TGAL), 3309–3312 (SRRG), 3338–3339 (DV), Lys-3388, and 3412–3413 (FS) each bind NADP(+). The interval 3277 to 3458 (GTVLLTGGTG…LSLGWGLWAE (182 aa)) is beta-ketoacyl reductase 2. The active-site For beta-ketoacyl reductase 2 activity is Tyr-3427. Positions 3570 to 3645 (AHLRDLVRTH…ELAGHLLDEL (76 aa)) constitute a Carrier 2 domain. Residue Ser-3605 is modified to O-(pantetheine 4'-phosphoryl)serine.

As to quaternary structure, homodimer. Pikromycin PKS consists of a combination of multimodular (PikAI and PikAII) and monomodular (PikAIII and PikAIV) polypeptides each coding for a functional synthase subunit which participates in 1 (monomodular) or 2 (multimodular) of the six FAS-like elongation steps required for formation of the polyketide. Module 1, 2, 3, 4, 5, and 6 participating in biosynthesis steps 1, 2, 3, 4, 5, and 6, respectively. Requires pantetheine 4'-phosphate as cofactor.

It catalyses the reaction 5 (S)-methylmalonyl-CoA + malonyl-CoA + 5 NADPH + 11 H(+) = 10-deoxymethynolide + 6 CO2 + 5 NADP(+) + 6 CoA + 2 H2O. The catalysed reaction is 6 (S)-methylmalonyl-CoA + malonyl-CoA + 5 NADPH + 12 H(+) = narbonolide + 7 CO2 + 5 NADP(+) + 7 CoA + 2 H2O. Its pathway is antibiotic biosynthesis. Functionally, involved in the biosynthesis of 12- and 14-membered ring macrolactone antibiotics such as methymycin/neomethymycin and pikromycin/narbomycin, respectively. Component of the pikromycin PKS which catalyzes the biosynthesis of both precursors 10-deoxymethynolide (12-membered ring macrolactone) and narbonolide (14-membered ring macrolactone). Chain elongation through PikAI, PikAII and PikAIII followed by thioesterase catalyzed termination results in the production of 10-deoxymethynolide, while continued elongation through PikAIV, followed by thioesterase (TE) catalyzed cyclization results in the biosynthesis of the narbonolide. The chain is Pikromycin polyketide synthase component PikAII from Streptomyces venezuelae.